The sequence spans 26 residues: Muscarinic toxin-like protein 1 (26 aa).

This sequence belongs to the three-finger toxin family. Short-chain subfamily. Orphan group VIII (haditoxin) sub-subfamily. In terms of assembly, homodimer; non-covalently linked. In terms of tissue distribution, expressed by the venom gland.

The protein resides in the secreted. In terms of biological role, antagonist of muscle and neuronal nicotinic acetylcholine receptors (nAChR) with highest affinity for neuronal alpha-7/CHRNA7 nAChRs. This Naja naja (Indian cobra) protein is Muscarinic toxin-like protein 1.